The primary structure comprises 214 residues: MKIILLGAPGAGKGTQAQFIMNKFGIPQISTGDMFRAAIKAGTELGKQAKALMDEGKLVPDELTVALVKDRIAQADCTNGFLLDGFPRTIPQADALKDSGVKIDFVLEFDVPDEVIVERMSGRRVHQASGRSYHIVYNPPKVEGKDDVTGEDLIIRADDKPETVLDRLAVYHKQTSPLIDYYQAEAKAGNTQYFRLDGTQKVEEVSQELDKILG.

10–15 (GAGKGT) is an ATP binding site. The interval 30-59 (STGDMFRAAIKAGTELGKQAKALMDEGKLV) is NMP. AMP is bound by residues threonine 31, arginine 36, 57–59 (KLV), 85–88 (GFPR), and glutamine 92. The tract at residues 122 to 159 (GRRVHQASGRSYHIVYNPPKVEGKDDVTGEDLIIRADD) is LID. Residues arginine 123 and 132–133 (SY) contribute to the ATP site. Arginine 156 and arginine 167 together coordinate AMP. Glutamine 200 contributes to the ATP binding site.

The protein belongs to the adenylate kinase family. In terms of assembly, monomer.

The protein resides in the cytoplasm. It catalyses the reaction AMP + ATP = 2 ADP. The protein operates within purine metabolism; AMP biosynthesis via salvage pathway; AMP from ADP: step 1/1. Functionally, catalyzes the reversible transfer of the terminal phosphate group between ATP and AMP. Plays an important role in cellular energy homeostasis and in adenine nucleotide metabolism. It may be linked to the biosynthesis of lipopolysaccharide surface molecules, which are important for the pathogenesis of H.influenzae. The protein is Adenylate kinase of Haemophilus influenzae (strain ATCC 51907 / DSM 11121 / KW20 / Rd).